A 94-amino-acid chain; its full sequence is DNA-directed RNA polymerase subunit omega (94 aa).

This sequence belongs to the RNA polymerase subunit omega family. As to quaternary structure, the RNAP catalytic core consists of 2 alpha, 1 beta, 1 beta' and 1 omega subunit. When a sigma factor is associated with the core the holoenzyme is formed, which can initiate transcription.

The catalysed reaction is RNA(n) + a ribonucleoside 5'-triphosphate = RNA(n+1) + diphosphate. Promotes RNA polymerase assembly. Latches the N- and C-terminal regions of the beta' subunit thereby facilitating its interaction with the beta and alpha subunits. In Bifidobacterium longum subsp. infantis (strain ATCC 15697 / DSM 20088 / JCM 1222 / NCTC 11817 / S12), this protein is DNA-directed RNA polymerase subunit omega.